Consider the following 342-residue polypeptide: Trans-3-hydroxy-L-proline dehydratase (342 aa).

The active-site Proton acceptor is the Ser90. Substrate-binding positions include 91 to 92 (GS), Asp251, and 256 to 257 (GT).

It belongs to the proline racemase family.

The enzyme catalyses trans-3-hydroxy-L-proline = 1-pyrroline-2-carboxylate + H2O. Its function is as follows. Catalyzes the dehydration of trans-3-hydroxy-L-proline (t3LHyp) to Delta(1)-pyrroline-2-carboxylate (Pyr2C). Is likely involved in a degradation pathway that converts t3LHyp to L-proline, which would allow P.denitrificans to grow on t3LHyp as a sole carbon source. Displays neither proline racemase activity nor 4-hydroxyproline 2-epimerase activity. In Paracoccus denitrificans (strain Pd 1222), this protein is Trans-3-hydroxy-L-proline dehydratase.